A 113-amino-acid polypeptide reads, in one-letter code: Cell cycle control protein 50C (113 aa).

The Cytoplasmic portion of the chain corresponds to 1 to 34 (MEERAQHCLSRLLDNSALKQQELPIHRLYFTARR). A helical membrane pass occupies residues 35 to 55 (VLFVFFATGIFCLCMGIILIL). The Extracellular segment spans residues 56–113 (SARSTQEIEINYTRICANCAKLRENASNFDKECTCSIPFYLSGKMMVGEIQETRLTLH). Asn66 carries an N-linked (GlcNAc...) asparagine glycan.

This sequence belongs to the CDC50/LEM3 family. As to expression, specifically expressed in testis.

Its subcellular location is the membrane. The polypeptide is Cell cycle control protein 50C (Homo sapiens (Human)).